The sequence spans 983 residues: Bifunctional glutamine synthetase adenylyltransferase/adenylyl-removing enzyme (983 aa).

The tract at residues 1–468 is adenylyl removase; sequence MTVENAKALF…KQYAALFAQA (468 aa). An adenylyl transferase region spans residues 473 to 983; it reads AASGNLVFTG…FDKLVGHGAD (511 aa).

Belongs to the GlnE family. Requires Mg(2+) as cofactor.

The catalysed reaction is [glutamine synthetase]-O(4)-(5'-adenylyl)-L-tyrosine + phosphate = [glutamine synthetase]-L-tyrosine + ADP. It catalyses the reaction [glutamine synthetase]-L-tyrosine + ATP = [glutamine synthetase]-O(4)-(5'-adenylyl)-L-tyrosine + diphosphate. In terms of biological role, involved in the regulation of glutamine synthetase GlnA, a key enzyme in the process to assimilate ammonia. When cellular nitrogen levels are high, the C-terminal adenylyl transferase (AT) inactivates GlnA by covalent transfer of an adenylyl group from ATP to specific tyrosine residue of GlnA, thus reducing its activity. Conversely, when nitrogen levels are low, the N-terminal adenylyl removase (AR) activates GlnA by removing the adenylyl group by phosphorolysis, increasing its activity. The regulatory region of GlnE binds the signal transduction protein PII (GlnB) which indicates the nitrogen status of the cell. The polypeptide is Bifunctional glutamine synthetase adenylyltransferase/adenylyl-removing enzyme (Brucella suis biovar 1 (strain 1330)).